The primary structure comprises 598 residues: Vanadium-dependent bromoperoxidase (598 aa).

Ca(2+)-binding residues include Phe-361, Gln-363, Asp-365, Asp-368, and Gln-370. Vanadate is bound by residues Lys-400 and Arg-408. His-480 is a catalytic residue. 5 residues coordinate vanadate: Ser-485, Gly-486, His-487, Arg-547, and His-553. His-487 is a catalytic residue.

This sequence belongs to the vanadium-dependent haloperoxidase family. As to quaternary structure, homododecamer. The cofactor is Ca(2+). It depends on vanadate as a cofactor.

The catalysed reaction is RH + Br(-) + H2O2 = RBr + 2 H2O.. Catalyzes the halogenation of organic substrates in the presence of hydrogen peroxide. This Corallina officinalis (Coral seaweed) protein is Vanadium-dependent bromoperoxidase.